A 357-amino-acid polypeptide reads, in one-letter code: Protein RecA (357 aa).

67 to 74 (GPESSGKT) is an ATP binding site. The segment at 334–357 (ELKPAAAGNSHDEDELAGEGKEEF) is disordered.

The protein belongs to the RecA family.

It is found in the cytoplasm. In terms of biological role, can catalyze the hydrolysis of ATP in the presence of single-stranded DNA, the ATP-dependent uptake of single-stranded DNA by duplex DNA, and the ATP-dependent hybridization of homologous single-stranded DNAs. It interacts with LexA causing its activation and leading to its autocatalytic cleavage. This is Protein RecA from Pectobacterium atrosepticum (strain SCRI 1043 / ATCC BAA-672) (Erwinia carotovora subsp. atroseptica).